We begin with the raw amino-acid sequence, 257 residues long: 1-(5-phosphoribosyl)-5-[(5-phosphoribosylamino)methylideneamino] imidazole-4-carboxamide isomerase (257 aa).

The active-site Proton acceptor is the Asp-8. The active-site Proton donor is Asp-129.

The protein belongs to the HisA/HisF family.

Its subcellular location is the cytoplasm. It carries out the reaction 1-(5-phospho-beta-D-ribosyl)-5-[(5-phospho-beta-D-ribosylamino)methylideneamino]imidazole-4-carboxamide = 5-[(5-phospho-1-deoxy-D-ribulos-1-ylimino)methylamino]-1-(5-phospho-beta-D-ribosyl)imidazole-4-carboxamide. It participates in amino-acid biosynthesis; L-histidine biosynthesis; L-histidine from 5-phospho-alpha-D-ribose 1-diphosphate: step 4/9. In Acaryochloris marina (strain MBIC 11017), this protein is 1-(5-phosphoribosyl)-5-[(5-phosphoribosylamino)methylideneamino] imidazole-4-carboxamide isomerase.